Here is a 156-residue protein sequence, read N- to C-terminus: Small ribosomal subunit protein uS7 (156 aa).

It belongs to the universal ribosomal protein uS7 family. In terms of assembly, part of the 30S ribosomal subunit. Contacts proteins S9 and S11.

In terms of biological role, one of the primary rRNA binding proteins, it binds directly to 16S rRNA where it nucleates assembly of the head domain of the 30S subunit. Is located at the subunit interface close to the decoding center, probably blocks exit of the E-site tRNA. In Coprothermobacter proteolyticus (strain ATCC 35245 / DSM 5265 / OCM 4 / BT), this protein is Small ribosomal subunit protein uS7.